We begin with the raw amino-acid sequence, 284 residues long: MSMLPSFGFTQEQVACVCEVLQQGGNLERLGRFLWSLPACDHLHKNESVLKAKAVVAFHRGNFRELYKILESHQFSPHNHPKLQQLWLKAHYVEAEKLRGRPLGAVGKYRVRRKFPLPRTIWDGEETSYCFKEKSRGVLREWYAHNPYPSPREKRELAEATGLTTTQVSNWFKNRRQRDRAAEAKERENTENNNSSSNKQNQLSPLEGGKPLMSSSEEEFSPPQSPDQNSVLLLQGNMGHARSSNYSLPGLTASQPSHGLQAHQHQLQDSLLGPLTSSLVDLGS.

The homeobox DNA-binding region spans 124–183 (GEETSYCFKEKSRGVLREWYAHNPYPSPREKRELAEATGLTTTQVSNWFKNRRQRDRAAE). Residues 168–271 (VSNWFKNRRQ…AHQHQLQDSL (104 aa)) form a disordered region. The segment covering 179–190 (DRAAEAKERENT) has biased composition (basic and acidic residues). The span at 242 to 271 (RSSNYSLPGLTASQPSHGLQAHQHQLQDSL) shows a compositional bias: polar residues.

Belongs to the SIX/Sine oculis homeobox family. As to quaternary structure, interacts with DACH1. Interacts with EYA1. Interacts with EYA2. Interacts with CDH1. Interacts with TBX18. Interacts with CEBPA. Interacts with CEBPB. Interacts with EBF2. In terms of processing, phosphorylated during interphase; becomes hyperphosphorylated during mitosis. Hyperphosphorylation impairs binding to promoter elements. Ubiquitinated by the anaphase promoting complex (APC), leading to its proteasomal degradation.

It is found in the nucleus. It localises to the cytoplasm. In terms of biological role, transcription factor that is involved in the regulation of cell proliferation, apoptosis and embryonic development. Plays an important role in the development of several organs, including kidney, muscle and inner ear. Depending on context, functions as a transcriptional repressor or activator. Lacks an activation domain, and requires interaction with EYA family members for transcription activation. Mediates nuclear translocation of EYA1 and EYA2. Binds the 5'-TCA[AG][AG]TTNC-3' motif present in the MEF3 element in the MYOG promoter and CIDEA enhancer. Regulates the expression of numerous genes, including MYC, CCNA1, CCND1 and EZR. Acts as an activator of the IGFBP5 promoter, probably coactivated by EYA2. Repression of precursor cell proliferation in myoblasts is switched to activation through recruitment of EYA3 to the SIX1-DACH1 complex. During myogenesis, seems to act together with EYA2 and DACH2. Regulates the expression of CCNA1. Promotes brown adipocyte differentiation. This chain is Homeobox protein SIX1 (SIX1), found in Lagothrix lagotricha (Brown woolly monkey).